The sequence spans 488 residues: Protein nucleotidyltransferase YdiU (488 aa).

8 residues coordinate ATP: Gly-91, Gly-93, Arg-94, Lys-114, Asp-126, Gly-127, Arg-177, and Arg-184. Asp-253 acts as the Proton acceptor in catalysis. Residues Asn-254 and Asp-263 each contribute to the Mg(2+) site. Asp-263 contacts ATP.

It belongs to the SELO family. It depends on Mg(2+) as a cofactor. Mn(2+) is required as a cofactor.

It carries out the reaction L-seryl-[protein] + ATP = 3-O-(5'-adenylyl)-L-seryl-[protein] + diphosphate. The catalysed reaction is L-threonyl-[protein] + ATP = 3-O-(5'-adenylyl)-L-threonyl-[protein] + diphosphate. The enzyme catalyses L-tyrosyl-[protein] + ATP = O-(5'-adenylyl)-L-tyrosyl-[protein] + diphosphate. It catalyses the reaction L-histidyl-[protein] + UTP = N(tele)-(5'-uridylyl)-L-histidyl-[protein] + diphosphate. It carries out the reaction L-seryl-[protein] + UTP = O-(5'-uridylyl)-L-seryl-[protein] + diphosphate. The catalysed reaction is L-tyrosyl-[protein] + UTP = O-(5'-uridylyl)-L-tyrosyl-[protein] + diphosphate. In terms of biological role, nucleotidyltransferase involved in the post-translational modification of proteins. It can catalyze the addition of adenosine monophosphate (AMP) or uridine monophosphate (UMP) to a protein, resulting in modifications known as AMPylation and UMPylation. The sequence is that of Protein nucleotidyltransferase YdiU from Bacillus cereus (strain AH187).